The sequence spans 197 residues: NADH-quinone oxidoreductase subunit C (197 aa).

This sequence belongs to the complex I 30 kDa subunit family. NDH-1 is composed of 14 different subunits. Subunits NuoB, C, D, E, F, and G constitute the peripheral sector of the complex.

It localises to the cell inner membrane. The catalysed reaction is a quinone + NADH + 5 H(+)(in) = a quinol + NAD(+) + 4 H(+)(out). In terms of biological role, NDH-1 shuttles electrons from NADH, via FMN and iron-sulfur (Fe-S) centers, to quinones in the respiratory chain. The immediate electron acceptor for the enzyme in this species is believed to be ubiquinone. Couples the redox reaction to proton translocation (for every two electrons transferred, four hydrogen ions are translocated across the cytoplasmic membrane), and thus conserves the redox energy in a proton gradient. In Caulobacter vibrioides (strain ATCC 19089 / CIP 103742 / CB 15) (Caulobacter crescentus), this protein is NADH-quinone oxidoreductase subunit C.